A 96-amino-acid chain; its full sequence is Protein Vpr (96 aa).

The tract at residues 1 to 42 is homooligomerization; the sequence is MEQAPEDQGPQREPYNEWTLELLEELKNEAVRHFPRPWLHGL. Ser79 is subject to Phosphoserine; by host.

The protein belongs to the HIV-1 VPR protein family. In terms of assembly, homooligomer, may form homodimer. Interacts with p6-gag region of the Pr55 Gag precursor protein through a (Leu-X-X)4 motif near the C-terminus of the P6gag protein. Interacts with host UNG. May interact with host RAD23A/HHR23A. Interacts with host VPRBP/DCAF1, leading to hijack the CUL4A-RBX1-DDB1-DCAF1/VPRBP complex, mediating ubiquitination of host proteins such as TERT and ZGPAT and arrest of the cell cycle in G2 phase. Post-translationally, phosphorylated on several residues by host. These phosphorylations regulate VPR activity for the nuclear import of the HIV-1 pre-integration complex.

The protein localises to the virion. Its subcellular location is the host nucleus. It localises to the host extracellular space. Its function is as follows. During virus replication, may deplete host UNG protein, and incude G2-M cell cycle arrest. Acts by targeting specific host proteins for degradation by the 26S proteasome, through association with the cellular CUL4A-DDB1 E3 ligase complex by direct interaction with host VPRPB/DCAF-1. Cell cycle arrest reportedly occurs within hours of infection and is not blocked by antiviral agents, suggesting that it is initiated by the VPR carried into the virion. Additionally, VPR induces apoptosis in a cell cycle dependent manner suggesting that these two effects are mechanistically linked. Detected in the serum and cerebrospinal fluid of AIDS patient, VPR may also induce cell death to bystander cells. During virus entry, plays a role in the transport of the viral pre-integration (PIC) complex to the host nucleus. This function is crucial for viral infection of non-dividing macrophages. May act directly at the nuclear pore complex, by binding nucleoporins phenylalanine-glycine (FG)-repeat regions. The chain is Protein Vpr from Human immunodeficiency virus type 1 group M subtype G (isolate 92NG083) (HIV-1).